The sequence spans 279 residues: Elongation factor Ts (279 aa).

Positions Thr80–Val83 are involved in Mg(2+) ion dislocation from EF-Tu.

It belongs to the EF-Ts family.

It localises to the cytoplasm. Functionally, associates with the EF-Tu.GDP complex and induces the exchange of GDP to GTP. It remains bound to the aminoacyl-tRNA.EF-Tu.GTP complex up to the GTP hydrolysis stage on the ribosome. This is Elongation factor Ts from Borreliella afzelii (strain PKo) (Borrelia afzelii).